We begin with the raw amino-acid sequence, 716 residues long: uncharacterized protein (716 aa).

Disordered regions lie at residues Ser-84 to Pro-103 and Val-153 to Gln-189. At Ser-97 the chain carries Phosphoserine. Glycyl lysine isopeptide (Lys-Gly) (interchain with G-Cter in SUMO2) cross-links involve residues Lys-201, Lys-204, Lys-237, Lys-283, and Lys-626.

This is an uncharacterized protein from Homo sapiens (Human).